The sequence spans 764 residues: Reticulon-1 (764 aa).

Disordered stretches follow at residues methionine 1 to leucine 37, proline 115 to glutamate 147, leucine 247 to glutamate 400, and glutamate 455 to methionine 475. The segment covering valine 261 to glycine 282 has biased composition (polar residues). Residues glutamate 328–glutamate 337 are compositionally biased toward basic and acidic residues. The 187-residue stretch at alanine 578–glutamate 764 folds into the Reticulon domain. A run of 2 helical transmembrane segments spans residues phenylalanine 607–phenylalanine 627 and valine 696–methionine 716.

It is found in the endoplasmic reticulum membrane. The protein localises to the nucleus. In terms of biological role, inhibits amyloid precursor protein processing, probably by blocking BACE1 activity. The sequence is that of Reticulon-1 from Xenopus tropicalis (Western clawed frog).